Consider the following 363-residue polypeptide: S-adenosylmethionine decarboxylase proenzyme (363 aa).

Active-site residues include Glu9 and Glu12. Catalysis depends on Ser69, which acts as the Schiff-base intermediate with substrate; via pyruvic acid. A Pyruvic acid (Ser); by autocatalysis modification is found at Ser69. Catalysis depends on Cys83, which acts as the Proton donor; for catalytic activity. Active-site proton acceptor; for processing activity residues include Ser232 and His245.

The protein belongs to the eukaryotic AdoMetDC family. The cofactor is pyruvate. Post-translationally, is synthesized initially as an inactive proenzyme. Formation of the active enzyme involves a self-maturation process in which the active site pyruvoyl group is generated from an internal serine residue via an autocatalytic post-translational modification. Two non-identical subunits are generated from the proenzyme in this reaction, and the pyruvate is formed at the N-terminus of the alpha chain, which is derived from the carboxyl end of the proenzyme. The post-translation cleavage follows an unusual pathway, termed non-hydrolytic serinolysis, in which the side chain hydroxyl group of the serine supplies its oxygen atom to form the C-terminus of the beta chain, while the remainder of the serine residue undergoes an oxidative deamination to produce ammonia and the pyruvoyl group blocking the N-terminus of the alpha chain.

The enzyme catalyses S-adenosyl-L-methionine + H(+) = S-adenosyl 3-(methylsulfanyl)propylamine + CO2. The protein operates within amine and polyamine biosynthesis; S-adenosylmethioninamine biosynthesis; S-adenosylmethioninamine from S-adenosyl-L-methionine: step 1/1. The sequence is that of S-adenosylmethionine decarboxylase proenzyme (SAMDC) from Spinacia oleracea (Spinach).